Here is a 984-residue protein sequence, read N- to C-terminus: Valine--tRNA ligase (984 aa).

The 'HIGH' region signature appears at 65–75 (PNVTGSLHMGH). The 'KMSKS' region motif lies at 579–583 (KMSKS). Lys-582 is an ATP binding site. Positions 954–984 (VEVVDAEKAKLAELEGQLTAMTAQMEELKNL) form a coiled coil.

It belongs to the class-I aminoacyl-tRNA synthetase family. ValS type 1 subfamily. Monomer.

The protein resides in the cytoplasm. The enzyme catalyses tRNA(Val) + L-valine + ATP = L-valyl-tRNA(Val) + AMP + diphosphate. Its function is as follows. Catalyzes the attachment of valine to tRNA(Val). As ValRS can inadvertently accommodate and process structurally similar amino acids such as threonine, to avoid such errors, it has a 'posttransfer' editing activity that hydrolyzes mischarged Thr-tRNA(Val) in a tRNA-dependent manner. The protein is Valine--tRNA ligase of Psychrobacter arcticus (strain DSM 17307 / VKM B-2377 / 273-4).